Reading from the N-terminus, the 1804-residue chain is Collagen alpha-1(XI) chain (1804 aa).

The signal sequence occupies residues 1-34 (MEPWSRWKTKRWIWDLTISTLALTFLFQAREVRG). Residues 35–511 (AAPVDILKAL…SKGPTISAQE (477 aa)) constitute a propeptide, N-terminal propeptide. Cystine bridges form between Cys60–Cys242 and Cys181–Cys235. Residues 70–242 (DVAYRVTEEA…DYCDHYSPDC (173 aa)) form the Laminin G-like domain. The segment at 229 to 417 (KAAYDYCDHY…DFTETSINGH (189 aa)) is nonhelical region. The span at 315–329 (YQTETPRRVSGSNEP) shows a compositional bias: polar residues. 2 disordered regions span residues 315-334 (YQTE…PVEE) and 433-506 (EPGM…KGPT). The triple-helical region (interrupted) stretch occupies residues 418–506 (GAYGEKGQKG…YGGDGSKGPT (89 aa)). The region spanning 440 to 488 (GPPGPAGPAGLMGPPGLQGPSGLPGDPGDRGPPGRPGLPGADGLPGPPG) is the Collagen-like 1 domain. Low complexity-rich tracts occupy residues 447-465 (PAGL…LPGD) and 477-494 (LPGA…LMLP). The interval 507 to 509 (ISA) is short nonhelical segment. The tract at residues 510 to 527 (QEAQAQAILQQARIALRG) is telopeptide. The interval 526–1567 (RGPPGPMGLT…SIQGDAGDNI (1042 aa)) is disordered. Collagen-like domains follow at residues 527 to 584 (GPPG…GADG) and 567 to 623 (PPGP…GPPG). The triple-helical region stretch occupies residues 528-1540 (PPGPMGLTGR…PGPPGPPGEV (1013 aa)). 2 stretches are compositionally biased toward gly residues: residues 539 to 548 (GPVGGPGSAG) and 581 to 590 (GADGGRGMPG). Lys610 is modified (allysine). Over residues 639-655 (PRGLPGEAGPRGLLGPR) the composition is skewed to low complexity. Residues 697 to 708 (QGLPGPQGPIGP) are compositionally biased toward pro residues. The segment covering 715-726 (QGKPGLAGLPGA) has biased composition (low complexity). The Collagen-like 4 domain occupies 728-781 (GPPGHPGKEGQSGEKGALGPPGPQGPIGYPGPRGVKGADGVRGLKGSKGEKGED). The span at 805–814 (RGEDGPEGPK) shows a compositional bias: basic and acidic residues. Low complexity-rich tracts occupy residues 873 to 901 (KPGP…PGPK), 916 to 925 (RGPQGPQGPV), and 969 to 979 (PQGPTGETGPI). A compositionally biased stretch (gly residues) spans 1040–1049 (GLKGGEGPQG). The span at 1074 to 1083 (RPGPQGPPGP) shows a compositional bias: pro residues. A compositionally biased stretch (low complexity) spans 1084–1108 (AGEKGAPGEKGPQGPAGRDGVQGPV). The segment covering 1160 to 1169 (GIAGGDGEPG) has biased composition (gly residues). A compositionally biased stretch (pro residues) spans 1216–1227 (MGPPGPPGPRGP). Low complexity-rich tracts occupy residues 1240–1249 (PGSIGSVGVV) and 1282–1296 (AGPP…IKGP). Positions 1341–1360 (QPGPPGPSGEAGPPGPPGKR) are enriched in pro residues. Low complexity-rich tracts occupy residues 1383-1392 (AEGPPGKTGP) and 1417-1426 (QGLPGAAGQD). 2 Collagen-like domains span residues 1427-1482 (GPPG…SPGA) and 1481-1539 (GAKG…PPGE). Over residues 1428-1437 (PPGPLGPPGL) the composition is skewed to pro residues. The residue at position 1450 (Lys1450) is an Allysine. Residues 1453–1462 (PGLIGLIGPP) are compositionally biased toward low complexity. The span at 1481 to 1490 (GAKGDGGIPG) shows a compositional bias: gly residues. A compositionally biased stretch (pro residues) spans 1491-1507 (PAGPIGPPGPPGLPGPA). Residues 1509 to 1519 (PKGNKGSSGPT) show a composition bias toward low complexity. The span at 1528–1537 (PGPPGPPGPP) shows a compositional bias: pro residues. The tract at residues 1541–1561 (IQPLPILSPKKTRRHTESIQG) is nonhelical region (C-terminal). The propeptide at 1562–1804 (DAGDNILDYS…FEVGPACFLG (243 aa)) is C-terminal propeptide. One can recognise a Fibrillar collagen NC1 domain in the interval 1575–1803 (EEIFGSLNSL…GFEVGPACFL (229 aa)). A disulfide bond links Cys1605 and Cys1637. Ca(2+) contacts are provided by Asp1623, Asn1625, Gln1626, Cys1628, and Asp1631. Asn1638 is a glycosylation site (N-linked (GlcNAc...) asparagine). Intrachain disulfides connect Cys1646–Cys1801 and Cys1712–Cys1755.

This sequence belongs to the fibrillar collagen family. As to quaternary structure, trimers composed of three different chains: alpha 1(XI), alpha 2(XI), and alpha 3(XI). Alpha 3(XI) is a post-translational modification of alpha 1(II). Alpha 1(V) can also be found instead of alpha 3(XI)=1(II). Prolines at the third position of the tripeptide repeating unit (G-X-Y) are hydroxylated in some or all of the chains. In terms of processing, N-glycosylated.

The protein localises to the secreted. The protein resides in the extracellular space. It localises to the extracellular matrix. In terms of biological role, may play an important role in fibrillogenesis by controlling lateral growth of collagen II fibrils. This is Collagen alpha-1(XI) chain (Col11a1) from Mus musculus (Mouse).